A 321-amino-acid polypeptide reads, in one-letter code: Probable heme-iron transport system permease protein IsdF (321 aa).

9 helical membrane-spanning segments follow: residues 9–29, 61–81, 89–109, 114–134, 143–163, 179–199, 233–253, 267–287, and 294–314; these read LLFLCLLVILIATAYISFVTG, ILIALMVGAMLAVSGALLQAA, ANIIGVSSGALIMRALCMLFI, FYLPLLSFIGGLIPFLIIILL, VSMILVGVALFVLLNGVLEIL, IWSDVYILAVSALLGLILTLL, VFLASATVAIVGQLAFLGIIV, LIPFSTVIGAWLLLVADLLGR, and EIPANAILMIVGGPMLIYLIC.

The protein belongs to the binding-protein-dependent transport system permease family. FecCD subfamily.

The protein localises to the cell membrane. Part of the binding-protein-dependent transport system for heme-iron. Responsible for the translocation of the substrate across the membrane. In Staphylococcus aureus (strain NCTC 8325 / PS 47), this protein is Probable heme-iron transport system permease protein IsdF (isdF).